A 383-amino-acid chain; its full sequence is S-adenosylmethionine synthase (383 aa).

H15 is a binding site for ATP. D17 lines the Mg(2+) pocket. E43 lines the K(+) pocket. L-methionine-binding residues include E56 and Q99. The interval 99-109 is flexible loop; it reads QSPDINQGVDR. Residues 164–166, 230–231, D239, 245–246, A262, and K266 contribute to the ATP site; these read DAK, RF, and RK. Residue D239 participates in L-methionine binding. Residue K270 coordinates L-methionine.

The protein belongs to the AdoMet synthase family. Homotetramer; dimer of dimers. Requires Mg(2+) as cofactor. It depends on K(+) as a cofactor.

Its subcellular location is the cytoplasm. The catalysed reaction is L-methionine + ATP + H2O = S-adenosyl-L-methionine + phosphate + diphosphate. The protein operates within amino-acid biosynthesis; S-adenosyl-L-methionine biosynthesis; S-adenosyl-L-methionine from L-methionine: step 1/1. Its function is as follows. Catalyzes the formation of S-adenosylmethionine (AdoMet) from methionine and ATP. The overall synthetic reaction is composed of two sequential steps, AdoMet formation and the subsequent tripolyphosphate hydrolysis which occurs prior to release of AdoMet from the enzyme. This Shewanella baltica (strain OS223) protein is S-adenosylmethionine synthase.